Consider the following 591-residue polypeptide: L-fucose isomerase (591 aa).

Residues glutamate 337 and aspartate 361 each act as proton acceptor in the active site. 3 residues coordinate Mn(2+): glutamate 337, aspartate 361, and histidine 528.

This sequence belongs to the L-fucose isomerase family. Homohexamer. Mn(2+) is required as a cofactor.

The protein localises to the cytoplasm. The catalysed reaction is L-fucose = L-fuculose. Its pathway is carbohydrate degradation; L-fucose degradation; L-lactaldehyde and glycerone phosphate from L-fucose: step 1/3. Converts the aldose L-fucose into the corresponding ketose L-fuculose. The protein is L-fucose isomerase of Shigella dysenteriae serotype 1 (strain Sd197).